A 168-amino-acid polypeptide reads, in one-letter code: Protein DESIGUAL 2 (168 aa).

The first 20 residues, methionine 1–alanine 20, serve as a signal peptide directing secretion. Transmembrane regions (helical) follow at residues leucine 56 to leucine 76, alanine 94 to valine 114, and valine 133 to isoleucine 153.

Belongs to the DESIGUAL family. As to expression, mainly expressed in roots, inflorescences and developing leaves, and, at low levels, in mature leaves.

It is found in the endoplasmic reticulum membrane. Its function is as follows. Involved, partially redundantly with VCC/DEAL1 and DEAL3, to ensure bilateral symmetry development and early leaf margin patterning, probably via the regulation of auxin and CUC2 distribution. The sequence is that of Protein DESIGUAL 2 from Arabidopsis thaliana (Mouse-ear cress).